The following is a 110-amino-acid chain: MKFCPKCGNLMLPDRKRKVWVCRSCGYEEPFDEEKDREKTKITKKVEHKPDEEIIVVEQDLKTLPTTKVTCPKCGNDTAYWWEMQTRAGDEPSTIFYKCTKCGYTWRAYE.

The Zn(2+) site is built by Cys4, Cys7, Cys22, Cys25, Cys71, Cys74, Cys99, and Cys102. A TFIIS-type zinc finger spans residues 67–107 (TKVTCPKCGNDTAYWWEMQTRAGDEPSTIFYKCTKCGYTWR).

This sequence belongs to the archaeal rpoM/eukaryotic RPA12/RPB9/RPC11 RNA polymerase family.

It localises to the chromosome. Functionally, involved in transcriptional proofreading and fidelity. Induces RNA cleavage activity in RNA polymerase (RNAP). Stimulates transcription elongation by RNAP on both naked DNA and histone-bound DNA (chromatin), facilitating transcription through the histone barrier. Stimulation depends on transcript cleavage. In the presence of TFS, the cleavage activity of RNAP truncates RNA back to position +15 in a stepwise manner by releasing mainly dinucleotides from the 3'-end of the nascent RNA. The truncated RNAs are able to continue elongation. Misincorporation of nucleotides during elongation of transcription leads to arrested elongation complexes which are rescued by TFS-promoted removal of a dinucleotide from the 3'-end. TFS is able to induce a cleavage resynthesis cycle in stalled elongation complexes (resulting from the next missing nucleotide or a reduced incorporation rate of a wrong nucleotide) preventing misincorporation and enabling proofreading in a post-incorporation manner. Pausing of elongation complexes is the main determinant of TFS-induced RNA cleavage. This is Transcription factor S from Thermococcus kodakarensis (strain ATCC BAA-918 / JCM 12380 / KOD1) (Pyrococcus kodakaraensis (strain KOD1)).